The sequence spans 597 residues: Protein GRISEA (597 aa).

Positions 1-41 (MPIINGQKMACGPCIRGHRSTKCNHYNERVMVPVRKPGRPL) form a DNA-binding region, copper-fist. The Zn(2+) site is built by cysteine 11, cysteine 14, cysteine 23, and histidine 25. Disordered stretches follow at residues 70–115 (PAGT…ASRR), 233–352 (AFVD…PGFG), 407–428 (SRPP…NGNN), and 467–541 (SPNS…SPAL). The span at 92-103 (SPASRTSSNRVT) shows a compositional bias: polar residues. Over residues 104-115 (KSGSGSKSASRR) the composition is skewed to low complexity. A compositionally biased stretch (gly residues) spans 269–281 (GGSGGGGCCGGGK). Positions 287-314 (QAPPPVPAPLPTPPQQQMPNIMPPPQPQ) are enriched in pro residues. A compositionally biased stretch (low complexity) spans 469–495 (NSSHGNSGSADSSANASPSANPLNLAS). Polar residues predominate over residues 521 to 530 (ANESDGSSNA).

It localises to the nucleus. Its function is as follows. Copper-sensing transcription factor that regulates copper uptake by transactivation of Ctr3, a high affinity copper permease. Binds to the palindromic UAS sequence 5'-TGTTGCTCANNNNAGAGCAACT-3'. Also transactivates Sod2, a mitochondrial manganese superoxide dismutase through the palindromic UAS sequence 5'-GTTTGCTCA-3' with 352 bp separating the two inverted repeats. Loss of function indirectly leads to rearrangement of mitochondrial DNA associated with senescence in wild-type strains. This is Protein GRISEA from Podospora anserina (Pleurage anserina).